The following is a 164-amino-acid chain: ATP synthase subunit b 1 (164 aa).

Residues Pro-8–Val-28 traverse the membrane as a helical segment.

The protein belongs to the ATPase B chain family. F-type ATPases have 2 components, F(1) - the catalytic core - and F(0) - the membrane proton channel. F(1) has five subunits: alpha(3), beta(3), gamma(1), delta(1), epsilon(1). F(0) has three main subunits: a(1), b(2) and c(10-14). The alpha and beta chains form an alternating ring which encloses part of the gamma chain. F(1) is attached to F(0) by a central stalk formed by the gamma and epsilon chains, while a peripheral stalk is formed by the delta and b chains.

Its subcellular location is the cell inner membrane. F(1)F(0) ATP synthase produces ATP from ADP in the presence of a proton or sodium gradient. F-type ATPases consist of two structural domains, F(1) containing the extramembraneous catalytic core and F(0) containing the membrane proton channel, linked together by a central stalk and a peripheral stalk. During catalysis, ATP synthesis in the catalytic domain of F(1) is coupled via a rotary mechanism of the central stalk subunits to proton translocation. Functionally, component of the F(0) channel, it forms part of the peripheral stalk, linking F(1) to F(0). In Bradyrhizobium sp. (strain ORS 278), this protein is ATP synthase subunit b 1.